The chain runs to 564 residues: NAD-dependent malic enzyme (564 aa).

Y102 (proton donor) is an active-site residue. R155 provides a ligand contact to NAD(+). Catalysis depends on K173, which acts as the Proton acceptor. A divalent metal cation contacts are provided by E244, D245, and D268. NAD(+)-binding residues include D268 and N417.

Belongs to the malic enzymes family. As to quaternary structure, homotetramer. Requires Mg(2+) as cofactor. Mn(2+) is required as a cofactor.

The catalysed reaction is (S)-malate + NAD(+) = pyruvate + CO2 + NADH. The enzyme catalyses oxaloacetate + H(+) = pyruvate + CO2. This chain is NAD-dependent malic enzyme, found in Pseudomonas aeruginosa (strain LESB58).